Reading from the N-terminus, the 440-residue chain is UDP-N-acetylglucosamine 1-carboxyvinyltransferase (440 aa).

A phosphoenolpyruvate-binding site is contributed by 22–23 (KN). UDP-N-acetyl-alpha-D-glucosamine is bound at residue Arg-102. Catalysis depends on Cys-126, which acts as the Proton donor. The residue at position 126 (Cys-126) is a 2-(S-cysteinyl)pyruvic acid O-phosphothioketal. UDP-N-acetyl-alpha-D-glucosamine is bound by residues 131-135 (RPVDQ), Asp-320, and Ile-342.

The protein belongs to the EPSP synthase family. MurA subfamily.

It is found in the cytoplasm. The enzyme catalyses phosphoenolpyruvate + UDP-N-acetyl-alpha-D-glucosamine = UDP-N-acetyl-3-O-(1-carboxyvinyl)-alpha-D-glucosamine + phosphate. It participates in cell wall biogenesis; peptidoglycan biosynthesis. Its function is as follows. Cell wall formation. Adds enolpyruvyl to UDP-N-acetylglucosamine. The sequence is that of UDP-N-acetylglucosamine 1-carboxyvinyltransferase from Acidovorax ebreus (strain TPSY) (Diaphorobacter sp. (strain TPSY)).